The primary structure comprises 214 residues: Cytochrome c biogenesis ATP-binding export protein CcmA (214 aa).

The ABC transporter domain occupies 12 to 214 (LAAHDLAFSR…TRMLTLEVAA (203 aa)). 44–51 (GDNGAGKT) is an ATP binding site.

Belongs to the ABC transporter superfamily. CcmA exporter (TC 3.A.1.107) family. As to quaternary structure, the complex is composed of two ATP-binding proteins (CcmA) and two transmembrane proteins (CcmB).

It is found in the cell inner membrane. It catalyses the reaction heme b(in) + ATP + H2O = heme b(out) + ADP + phosphate + H(+). Functionally, part of the ABC transporter complex CcmAB involved in the biogenesis of c-type cytochromes; once thought to export heme, this seems not to be the case, but its exact role is uncertain. Responsible for energy coupling to the transport system. This is Cytochrome c biogenesis ATP-binding export protein CcmA from Xanthomonas axonopodis pv. citri (strain 306).